A 917-amino-acid polypeptide reads, in one-letter code: Major intrinsically disordered Notch2-binding receptor 1 (917 aa).

The Cytoplasmic segment spans residues 1 to 892 (MEANQEASLF…AEFRRAKVCK (892 aa)). Disordered regions lie at residues 337–367 (STYF…WPAK), 388–410 (PSEE…GPDR), 461–483 (SCTS…QHVL), 568–588 (ITNG…NVHH), 652–687 (SEAP…CSDA), 706–727 (TRPS…IASI), and 746–783 (NEEE…LPKQ). Positions 461–480 (SCTSGQHSSDTSSVGTQTEQ) are enriched in polar residues. Residues 576–588 (KGDKCNRPENVHH) show a composition bias toward basic and acidic residues. Ser712 carries the phosphoserine modification. The chain crosses the membrane as a helical span at residues 893–913 (IAALITAAACTVILVIVVPIC). At 914–917 (TMKS) the chain is on the extracellular side.

It belongs to the MINAR family. As to quaternary structure, interacts with NOTCH2; this interaction increases MINAR1 stability. Interacts (via N-terminus) with DEPTOR (via PDZ domain); this interaction may stabilize DEPTOR protein by impairing its ubiquitination. Expressed in brain and in islets of Langerhans.

It localises to the cell membrane. Intrinsically disordered protein which may negatively regulate mTOR signaling pathway by stabilizing the mTOR complex component DEPTOR. Negatively regulates angiogenesis. Negatively regulates cell growth. Negatively regulates neurite outgrowth in hippocampal neurons. The polypeptide is Major intrinsically disordered Notch2-binding receptor 1 (Minar1) (Mus musculus (Mouse)).